A 77-amino-acid polypeptide reads, in one-letter code: U8-lycotoxin-Ls1m (77 aa).

The first 20 residues, 1–20, serve as a signal peptide directing secretion; the sequence is MKLMIFTGLFLFAIVSLIEA. Residues 21 to 26 constitute a propeptide that is removed on maturation; sequence QAENEK.

The protein belongs to the neurotoxin 19 (CSTX) family. 08 (U8-Lctx) subfamily. Contains 4 disulfide bonds. As to expression, expressed by the venom gland.

The protein resides in the secreted. This is U8-lycotoxin-Ls1m from Lycosa singoriensis (Wolf spider).